We begin with the raw amino-acid sequence, 355 residues long: Homeobox protein knotted-1-like LET6 (355 aa).

The interval 75-96 (PFMDNNNNNNPQEDNNSSSSSI) is disordered. Residues 79 to 96 (NNNNNNPQEDNNSSSSSI) are compositionally biased toward low complexity. Positions 237 to 257 (ELKGQLLRKYSGYLGSLKQEF) constitute an ELK domain. The homeobox; TALE-type DNA-binding region spans 258-321 (MKKRKKGKLP…NQRKRHWKPS (64 aa)).

The protein belongs to the TALE/KNOX homeobox family. Expressed in developing lateral organs and developing ovaries in flowers.

The protein localises to the nucleus. In terms of biological role, may have a role to play in formative events in ovule and embryo morphogenesis. Probably binds to the DNA sequence 5'-TGAC-3'. The protein is Homeobox protein knotted-1-like LET6 (LET6) of Solanum lycopersicum (Tomato).